The chain runs to 365 residues: Transcription factor MYB93 (365 aa).

HTH myb-type domains are found at residues 9-61 (ENGL…TNYL) and 62-116 (RPDI…KKKL). 2 DNA-binding regions (H-T-H motif) span residues 37 to 61 (WRAL…TNYL) and 89 to 112 (WSAI…NTHL).

In terms of assembly, interacts with FBX5.

The protein localises to the nucleus. It is found in the cytoplasm. Its function is as follows. Transcription factor that acts as a negative regulator of lateral root (LR) development. Required for normal auxin responses during LR development. May be part of a negative feedback loop stimulated specifically in the endodermis upon LR initiation to ensure that LRs are formed only in the correct place. In Arabidopsis thaliana (Mouse-ear cress), this protein is Transcription factor MYB93.